The sequence spans 788 residues: Endonuclease MutS2 (788 aa).

Residue 332–339 (GPNTGGKT) coordinates ATP. The region spanning 713–788 (VDLRGMDAEE…GTGVTVVELK (76 aa)) is the Smr domain.

The protein belongs to the DNA mismatch repair MutS family. MutS2 subfamily. As to quaternary structure, homodimer. Binds to stalled ribosomes, contacting rRNA.

Endonuclease that is involved in the suppression of homologous recombination and thus may have a key role in the control of bacterial genetic diversity. In terms of biological role, acts as a ribosome collision sensor, splitting the ribosome into its 2 subunits. Detects stalled/collided 70S ribosomes which it binds and splits by an ATP-hydrolysis driven conformational change. Acts upstream of the ribosome quality control system (RQC), a ribosome-associated complex that mediates the extraction of incompletely synthesized nascent chains from stalled ribosomes and their subsequent degradation. Probably generates substrates for RQC. In Clostridium botulinum (strain Langeland / NCTC 10281 / Type F), this protein is Endonuclease MutS2.